A 204-amino-acid chain; its full sequence is Translation initiation factor 2 subunit beta (204 aa).

Positions 146-204 constitute a TRAM domain; it reads NLEEGQVLDVEIQSLSKRGDGVVKMGRYIMYVSNAKPGQSVKIKISRISGSIVFTERAE.

Belongs to the eIF-2-beta/eIF-5 family. In terms of assembly, heterotrimer composed of an alpha, a beta and a gamma chain.

Its function is as follows. eIF-2 functions in the early steps of protein synthesis by forming a ternary complex with GTP and initiator tRNA. The chain is Translation initiation factor 2 subunit beta from Methanoregula boonei (strain DSM 21154 / JCM 14090 / 6A8).